The chain runs to 101 residues: Large ribosomal subunit protein eL31 (101 aa).

This sequence belongs to the eukaryotic ribosomal protein eL31 family.

The polypeptide is Large ribosomal subunit protein eL31 (Ignicoccus hospitalis (strain KIN4/I / DSM 18386 / JCM 14125)).